The primary structure comprises 387 residues: Early growth response protein 3 (387 aa).

Positions 241 to 283 are disordered; it reads PGFGSLPQPPLTLKPIRPRKYPNRPSKTPLHERPHACPAEGCD. A compositionally biased stretch (basic and acidic residues) spans 269-283; sequence PLHERPHACPAEGCD. C2H2-type zinc fingers lie at residues 275 to 299, 305 to 327, and 333 to 355; these read HACP…LRIH, FQCR…IRTH, and FACE…AKIH. The interval 348–387 is disordered; that stretch reads RKRHAKIHLKQKEKKSEKGGAPSASSAPTVSLAPVVTTCA. Residues 350 to 360 are compositionally biased toward basic residues; that stretch reads RHAKIHLKQKE.

This sequence belongs to the EGR C2H2-type zinc-finger protein family.

The protein localises to the nucleus. Probable transcription factor involved in muscle spindle development. The protein is Early growth response protein 3 (Egr3) of Mus musculus (Mouse).